The primary structure comprises 643 residues: Phosphomethylpyrimidine synthase (643 aa).

Substrate-binding positions include N248, M277, Y306, H342, 362–364 (SRG), 403–406 (DGLR), and E442. Position 446 (H446) interacts with Zn(2+). Y469 contributes to the substrate binding site. H510 provides a ligand contact to Zn(2+). Residues C590, C593, and C598 each contribute to the [4Fe-4S] cluster site.

The protein belongs to the ThiC family. As to quaternary structure, homodimer. [4Fe-4S] cluster serves as cofactor.

The enzyme catalyses 5-amino-1-(5-phospho-beta-D-ribosyl)imidazole + S-adenosyl-L-methionine = 4-amino-2-methyl-5-(phosphooxymethyl)pyrimidine + CO + 5'-deoxyadenosine + formate + L-methionine + 3 H(+). It functions in the pathway cofactor biosynthesis; thiamine diphosphate biosynthesis. In terms of biological role, catalyzes the synthesis of the hydroxymethylpyrimidine phosphate (HMP-P) moiety of thiamine from aminoimidazole ribotide (AIR) in a radical S-adenosyl-L-methionine (SAM)-dependent reaction. This Burkholderia ambifaria (strain ATCC BAA-244 / DSM 16087 / CCUG 44356 / LMG 19182 / AMMD) (Burkholderia cepacia (strain AMMD)) protein is Phosphomethylpyrimidine synthase.